The primary structure comprises 157 residues: Protein Smg homolog (157 aa).

It belongs to the Smg family.

The sequence is that of Protein Smg homolog from Alkalilimnicola ehrlichii (strain ATCC BAA-1101 / DSM 17681 / MLHE-1).